The chain runs to 201 residues: Coiled-coil domain-containing protein 195 (201 aa).

Residues 4–38 (DIQLMRLIQEMRAEIHKLEKENQALRMKLTASSQR) are a coiled coil. Disordered regions lie at residues 28-72 (LRMK…DAAP) and 179-201 (SKNS…IIAE). Low complexity predominate over residues 179-188 (SKNSSSLKHS). A compositionally biased stretch (polar residues) spans 189–201 (PNQATNQLSIIAE).

This chain is Coiled-coil domain-containing protein 195, found in Homo sapiens (Human).